A 266-amino-acid chain; its full sequence is Hydroxyacylglutathione hydrolase (266 aa).

Positions 53, 55, 57, 58, 118, 140, and 178 each coordinate Zn(2+).

This sequence belongs to the metallo-beta-lactamase superfamily. Glyoxalase II family. Monomer. Zn(2+) serves as cofactor.

It carries out the reaction an S-(2-hydroxyacyl)glutathione + H2O = a 2-hydroxy carboxylate + glutathione + H(+). It functions in the pathway secondary metabolite metabolism; methylglyoxal degradation; (R)-lactate from methylglyoxal: step 2/2. In terms of biological role, thiolesterase that catalyzes the hydrolysis of S-D-lactoyl-glutathione to form glutathione and D-lactic acid. The protein is Hydroxyacylglutathione hydrolase of Cupriavidus taiwanensis (strain DSM 17343 / BCRC 17206 / CCUG 44338 / CIP 107171 / LMG 19424 / R1) (Ralstonia taiwanensis (strain LMG 19424)).